Here is a 1249-residue protein sequence, read N- to C-terminus: MKLKEIDRTAMQAWSPAQNHPIYLATGTSAQQLDATFSTNASLEIFELDLSDPSLDMKSCATFSSSHRYHKLIWGPHKMDSKGDVSGVLIAGGENGNIILYDPSKIIAGDKEVVIAQKDKHTGPVRALDVNIFQTNLVASGANESEIYIWDLNNFATPMTPGAKTQPPEDISCIAWNRQVQHILASASPSGRATVWDLRKNEPIIKVSDHSNRMHCSGLAWHPDVATQMVLASEDDRLPVVQMWDLRFASSPLRVLENHARGILAIAWSMADPELLLSCGKDAKILCSNPNTGEVLYELPTNTQWCFDIQWCPRNPAVLSAASFDGRIRVYSIMGGSIDGLRQKQVDKLSSSFGNLDPFGTGQPLPPLQIPQQTSQHSIVLPLKKPPKWIRRPVGASFSFGGKLVTFENVTGQPQQGAEQPRRQPVFISQVVTEKDFLSRSEQLQHVVQSQGFISYCQKKIDASQTDFEKNVWSFLKVNFEEDSRGKYLELLGYRREDLGEKIALALNRVDGSDVALKDSDRVAQSDGEESPAEEGQLLGERIKEEKQECDFLPSAGGGTFNISVSGDIDGLITRALLTGNFESAVDLCLHDNRMADAIILAIAGGQELLAQTQKKYFAKSQSKITRLITAVVMKNWKEIVESCDLKNWREALAAVLTYAKPDEFSALCDLLGARLESEGDSLLRTQACLCYICAGNVERLVACWTKAQDGSNPLSLQDLIEKVVILRKAVQLTQALDTNTVGALLAEKMSQYANLLAAQGSIAAALAFLPDNTNQPDIVQLRDRLCRAQGRSVPGQESSRSSYEGQPLPKGGPGPLAGHPQVSRVQSQQYYPQVRIAPTVTTWSDRTPTALPSHPPAACPSDTQGGNPPPPGFIMHGNVVPNSPAPLPTSPGHMHSQPPPYPQPQPYQPAQQYSLGTGGSAVYRPQQPVAPPASKRYPNAPYVSPVASYSGQPHMYTAQPASSPTSSSAPLPPPPSSGASFQHGGPGAPPSSSAYALPPGTTGTPPAASELPASQRTGPQNGWNDPPALNRVPKKKKLPENFMPPVPITSPIMNPGGDPQPQGLQQQPSASGPRSSHASFPQPHLAGGQPFHGIQQPLAQTGMPPSFSKPNTEGAPGAPIGNTIQHVQALPTEKITKKPIPDEHLILKTTFEDLIQRCLSSATDPQTKRKLDDASKRLECLYDKLRDQTLSPTIISGLHSIARSIETRNYSEGLTVHTHIVSTSNFSETSAFMPVLKVVLSQASKLGV.

WD repeat units lie at residues 4-47, 64-111, 120-160, 166-206, 209-254, 258-298, and 301-342; these read KEID…EIFE, SSSH…AGDK, KHTG…TPMT, QPPE…PIIK, DHSN…SPLR, NHAR…VLYE, and TNTQ…DGLR. The interaction with SEC13 stretch occupies residues 161-470; sequence PGAKTQPPED…IDASQTDFEK (310 aa). The stretch at 397-429 is one WD 8; interaction with SEC13 repeat; it reads SFSFGGKLVTFENVTGQPQQGAEQPRRQPVFIS. Arginine 423 bears the Asymmetric dimethylarginine mark. Phosphoserine occurs at positions 526 and 531. A Glycyl lysine isopeptide (Lys-Gly) (interchain with G-Cter in ubiquitin) cross-link involves residue lysine 647. 3 disordered regions span residues 790–829, 842–940, and 954–1123; these read QGRSVPGQESSRSSYEGQPLPKGGPGPLAGHPQVSRVQSQ, TTWS…RYPN, and PHMY…PIGN. A compositionally biased stretch (polar residues) spans 796–805; that stretch reads GQESSRSSYE. Position 799 is a phosphoserine (serine 799). An interaction with PDCD6 region spans residues 800–1142; it reads SRSSYEGQPL…TEKITKKPIP (343 aa). The ALG-2-binding site motif-2 (ABS-2) motif lies at 873–879; it reads GFIMHGN. The segment covering 898-908 has biased composition (pro residues); the sequence is QPPPYPQPQPY. 2 stretches are compositionally biased toward low complexity: residues 961–970 and 991–1007; these read PASSPTSSSA and PSSSAYALPPGTTGTPP. Positions 1013–1024 are enriched in polar residues; sequence PASQRTGPQNGW. The span at 1056–1074 shows a compositional bias: low complexity; that stretch reads PGGDPQPQGLQQQPSASGP. A Phosphothreonine modification is found at threonine 1190. Phosphoserine is present on serine 1192. Lysine 1246 is covalently cross-linked (Glycyl lysine isopeptide (Lys-Gly) (interchain with G-Cter in ubiquitin)).

Belongs to the WD repeat SEC31 family. In terms of assembly, COPII is composed of at least 5 proteins: the SEC23/24 complex, the SEC13/31 complex and SAR1. SEC13 and SEC31 make a 2:2 tetramer that forms the edge element of the COPII outer coat. The tetramer self-assembles in multiple copies to form the complete polyhedral cage. Interacts (via WD 8) with SEC13. Interacts with PDCD6; interaction takes place in response to cytosolic calcium increase and leads to bridge together the BCR(KLHL12) complex and SEC31A, leading to monoubiquitination. Interacts with KLHL12. In terms of processing, monoubiquitinated by the BCR(KLHL12) E3 ubiquitin ligase complex, leading to regulate the size of COPII coats. In terms of tissue distribution, ubiquitously expressed.

The protein resides in the cytoplasm. It is found in the cytoplasmic vesicle. The protein localises to the COPII-coated vesicle membrane. Its subcellular location is the endoplasmic reticulum membrane. In terms of biological role, component of the coat protein complex II (COPII) which promotes the formation of transport vesicles from the endoplasmic reticulum (ER). The coat has two main functions, the physical deformation of the endoplasmic reticulum membrane into vesicles and the selection of cargo molecules. This is Protein transport protein Sec31A (Sec31a) from Rattus norvegicus (Rat).